The sequence spans 671 residues: UvrABC system protein C (671 aa).

The segment at M1–T20 is disordered. Residues P10–T20 are compositionally biased toward low complexity. One can recognise a GIY-YIG domain in the interval P37 to I115. A UVR domain is found at R232 to V267.

The protein belongs to the UvrC family. Interacts with UvrB in an incision complex.

It localises to the cytoplasm. Functionally, the UvrABC repair system catalyzes the recognition and processing of DNA lesions. UvrC both incises the 5' and 3' sides of the lesion. The N-terminal half is responsible for the 3' incision and the C-terminal half is responsible for the 5' incision. This Albidiferax ferrireducens (strain ATCC BAA-621 / DSM 15236 / T118) (Rhodoferax ferrireducens) protein is UvrABC system protein C.